Consider the following 332-residue polypeptide: Geranylgeranyl pyrophosphate synthase 2 (332 aa).

Isopentenyl diphosphate contacts are provided by Lys-55, Arg-58, and His-87. Mg(2+) contacts are provided by Asp-94 and Asp-98. Arg-103 contacts dimethylallyl diphosphate. Position 104 (Arg-104) interacts with isopentenyl diphosphate. Lys-181, Thr-182, and Gln-218 together coordinate dimethylallyl diphosphate. Mg(2+) is bound at residue Asp-221. Dimethylallyl diphosphate-binding residues include Asn-225, Lys-235, and Lys-245.

The protein belongs to the FPP/GGPP synthase family. Mg(2+) serves as cofactor.

It carries out the reaction isopentenyl diphosphate + dimethylallyl diphosphate = (2E)-geranyl diphosphate + diphosphate. The enzyme catalyses isopentenyl diphosphate + (2E)-geranyl diphosphate = (2E,6E)-farnesyl diphosphate + diphosphate. The catalysed reaction is isopentenyl diphosphate + (2E,6E)-farnesyl diphosphate = (2E,6E,10E)-geranylgeranyl diphosphate + diphosphate. Geranylgeranyl pyrophosphate synthase; part of the gene cluster 3 that mediates the biosynthesis of an isoprenoid secondary metabolite. The polypeptide is Geranylgeranyl pyrophosphate synthase 2 (GGS2) (Zymoseptoria tritici (strain CBS 115943 / IPO323) (Speckled leaf blotch fungus)).